Consider the following 304-residue polypeptide: Tyrosine recombinase XerD (304 aa).

Residues 1–92 (MKARVLAKTW…VARGLHKFAL (92 aa)) enclose the Core-binding (CB) domain. Residues 113–298 (HLPDTLSINE…TADSLREVWR (186 aa)) form the Tyr recombinase domain. Catalysis depends on residues Arg-156, Lys-180, His-250, Arg-253, and His-276. Tyr-285 (O-(3'-phospho-DNA)-tyrosine intermediate) is an active-site residue.

It belongs to the 'phage' integrase family. XerD subfamily. As to quaternary structure, forms a cyclic heterotetrameric complex composed of two molecules of XerC and two molecules of XerD.

The protein localises to the cytoplasm. Its function is as follows. Site-specific tyrosine recombinase, which acts by catalyzing the cutting and rejoining of the recombining DNA molecules. The XerC-XerD complex is essential to convert dimers of the bacterial chromosome into monomers to permit their segregation at cell division. It also contributes to the segregational stability of plasmids. This is Tyrosine recombinase XerD from Corynebacterium glutamicum (strain ATCC 13032 / DSM 20300 / JCM 1318 / BCRC 11384 / CCUG 27702 / LMG 3730 / NBRC 12168 / NCIMB 10025 / NRRL B-2784 / 534).